The chain runs to 110 residues: UPF0060 membrane protein Bamb_1160 (110 aa).

4 helical membrane passes run 9 to 29, 34 to 54, 66 to 86, and 88 to 108; these read ALFA…WLVL, PVWL…LLTL, YGGV…GVAL, and RWDA…ALQP.

It belongs to the UPF0060 family.

Its subcellular location is the cell inner membrane. This Burkholderia ambifaria (strain ATCC BAA-244 / DSM 16087 / CCUG 44356 / LMG 19182 / AMMD) (Burkholderia cepacia (strain AMMD)) protein is UPF0060 membrane protein Bamb_1160.